We begin with the raw amino-acid sequence, 152 residues long: Transcription factor XE1.1 (152 aa).

Disordered stretches follow at residues Arg1–Ala54 and Lys123–Met152. Composition is skewed to basic and acidic residues over residues Asp7–Ser22 and Pro38–Ala54. One can recognise a bHLH domain in the interval Glu47–Leu100. Positions Gln102–Ser125 are class A specific domain. The span at Thr143–Met152 shows a compositional bias: polar residues.

In terms of assembly, efficient DNA binding requires dimerization with another bHLH protein. Forms homo- or heterooligomers with myogenin, E12 and ITF2 proteins.

The protein localises to the nucleus. In terms of biological role, transcriptional regulator. Involved in the initiation of neuronal differentiation. Activates transcription by binding to the E box-containing promoter. The protein is Transcription factor XE1.1 of Xenopus laevis (African clawed frog).